We begin with the raw amino-acid sequence, 867 residues long: Leucine--tRNA ligase (867 aa).

Positions 42 to 52 (PYPSGKLHMGH) match the 'HIGH' region motif. The 'KMSKS' region signature appears at 631–635 (KMSKS). Residue Lys634 participates in ATP binding.

Belongs to the class-I aminoacyl-tRNA synthetase family.

The protein localises to the cytoplasm. The catalysed reaction is tRNA(Leu) + L-leucine + ATP = L-leucyl-tRNA(Leu) + AMP + diphosphate. The chain is Leucine--tRNA ligase from Dichelobacter nodosus (strain VCS1703A).